A 410-amino-acid chain; its full sequence is MSLPESPHSPATLDYALEDPHQGQRSREKSKATEVMADMFDGRLEPIVFPPPRLPEEGVAPQDPADGGHTFHILVDAGRSHGAIKAGQEVTPPPAEGLEAASASLTTDGSLKNGFPGEETHGLGGEKALETCGAGRSESEVIAEGKAEDVKPEECAMFSAPVDEKPGGEEMDVAEENRAIDEVNREAGPGPGPGPLNVGLHLNPLESIQLELDSVNAEADRALLQVERRFGQIHEYYLEQRNDIIRNIPGFWVTAFRHHPQLSAMIRGQDAEMLSYLTNLEVKELRHPRTGCKFKFFFQRNPYFRNKLIVKVYEVRSFGQVVSFSTLIMWRRGHGPQSFIHRNRHVICSFFTWFSDHSLPESDRIAQIIKEDLWSNPLQYYLLGEDAHRARRRLVREPVEIPRPFGFQCG.

Disordered regions lie at residues 1 to 31 and 46 to 69; these read MSLP…EKSK and PIVF…DGGH. Serine 9 is modified (phosphoserine). Over residues 18-31 the composition is skewed to basic and acidic residues; sequence EDPHQGQRSREKSK.

The protein belongs to the nucleosome assembly protein (NAP) family.

This is Testis-specific Y-encoded-like protein 6 (TSPYL6) from Homo sapiens (Human).